The primary structure comprises 185 residues: MIADIKKDAQERMGKCVDATKNQMAKVRTGRAHPSLLDSIQVSYYGTMTPLNQVANVGVEDARTLSVTVFDRSAIQAVEKAIMSSDLGLNPMSAGATLRIPLPALTEERRKDFIKVVRAEAEGGRVAIRNVRRDAISDVKKLEKAKECTEDDVRRFEDEVQKFTDAHIKKVDEILAAKEIELMEV.

It belongs to the RRF family.

It localises to the cytoplasm. Responsible for the release of ribosomes from messenger RNA at the termination of protein biosynthesis. May increase the efficiency of translation by recycling ribosomes from one round of translation to another. The chain is Ribosome-recycling factor from Shewanella oneidensis (strain ATCC 700550 / JCM 31522 / CIP 106686 / LMG 19005 / NCIMB 14063 / MR-1).